Reading from the N-terminus, the 269-residue chain is Tryptophan synthase alpha chain (269 aa).

Catalysis depends on proton acceptor residues Glu50 and Asp61.

It belongs to the TrpA family. Tetramer of two alpha and two beta chains.

The catalysed reaction is (1S,2R)-1-C-(indol-3-yl)glycerol 3-phosphate + L-serine = D-glyceraldehyde 3-phosphate + L-tryptophan + H2O. It functions in the pathway amino-acid biosynthesis; L-tryptophan biosynthesis; L-tryptophan from chorismate: step 5/5. In terms of biological role, the alpha subunit is responsible for the aldol cleavage of indoleglycerol phosphate to indole and glyceraldehyde 3-phosphate. This chain is Tryptophan synthase alpha chain, found in Francisella tularensis subsp. tularensis (strain FSC 198).